A 1129-amino-acid polypeptide reads, in one-letter code: ISWI chromatin-remodeling complex ATPase ISW1 (1129 aa).

The tract at residues 144–177 is disordered; that stretch reads KANGKGKGKHQDVRRRKTEHEEDAELLKEEDSDD. The span at 147–160 shows a compositional bias: basic residues; the sequence is GKGKGKHQDVRRRK. Residues 164–177 are compositionally biased toward acidic residues; that stretch reads EEDAELLKEEDSDD. One can recognise a Helicase ATP-binding domain in the interval 208-373; that stretch reads VSLHKNKIAG…WALLNFLLPD (166 aa). 221–228 contributes to the ATP binding site; that stretch reads DEMGLGKT. The DEAH box motif lies at 324 to 327; sequence DEAH. The Helicase C-terminal domain occupies 506–657; that stretch reads VLDKLLKKLK…QLVIQQNRTS (152 aa). The disordered stretch occupies residues 683-705; the sequence is FKSGTSTGSAGTPEPGSGEKGDD. The residue at position 694 (Thr694) is a Phosphothreonine. The residue at position 846 (Ser846) is a Phosphoserine. 2 consecutive SANT domains span residues 882–935 and 988–1052; these read EGFT…SNIE and NKRT…LLQC. Over residues 1073–1108 the composition is skewed to basic and acidic residues; that stretch reads KEDENGKRIREEFADQTANEKENVDGVESKKAKIED. The disordered stretch occupies residues 1073–1129; sequence KEDENGKRIREEFADQTANEKENVDGVESKKAKIEDTSNVGTEQLVAEKIPENETTH.

It belongs to the SNF2/RAD54 helicase family. ISWI subfamily. As to quaternary structure, component of the ISW1A complex, which at least consists of ISW1 and IOC3. Component of the ISW1B complex, which at least consists of ISW1, IOC2 and IOC4.

The protein resides in the nucleus. Catalytic component of ISW1-type complexes, which act by remodeling the chromatin by catalyzing an ATP-dependent alteration in the structure of nucleosomal DNA. They are involved in coordinating transcriptional repression, activation and elongation phases. The ISW1A complex represses gene expression at initiation through specific positioning of a promoter proximal dinucleosome. The ISW1B complex acts within coding regions to control the amount of RNA polymerase II released into productive elongation and to coordinate elongation with termination and pre-mRNA processing. The protein is ISWI chromatin-remodeling complex ATPase ISW1 (ISW1) of Saccharomyces cerevisiae (strain ATCC 204508 / S288c) (Baker's yeast).